A 124-amino-acid polypeptide reads, in one-letter code: 14 kDa peptide of ubiquinol-cytochrome c2 oxidoreductase complex (124 aa).

Residues 85–102 traverse the membrane as a helical segment; sequence LGGFASGALLALALAGIF.

It localises to the cell inner membrane. Functionally, component of the ubiquinol-cytochrome c reductase complex (complex III or cytochrome b-c1 complex), which is a respiratory chain that generates an electrochemical potential coupled to ATP synthesis. This is 14 kDa peptide of ubiquinol-cytochrome c2 oxidoreductase complex from Cereibacter sphaeroides (Rhodobacter sphaeroides).